Reading from the N-terminus, the 534-residue chain is Autophagy-related protein 20 (534 aa).

Residues 1–21 (MAQDDSYEEKPEVISSDSGGS) form a disordered region. Residues 1–137 (MAQDDSYEEK…DKFIHSTVSW (137 aa)) form the PX domain. Arginine 55, serine 57, lysine 81, and arginine 104 together coordinate a 1,2-diacyl-sn-glycero-3-phospho-(1D-myo-inositol-3-phosphate). The disordered stretch occupies residues 179 to 272 (ANSLSPPSSR…NGKDAPSPVL (94 aa)). Over residues 203-212 (SSLEPSSPLG) the composition is skewed to low complexity. Residues 245–263 (YNSSPSELSPTQRRSSISN) show a composition bias toward polar residues.

Belongs to the sorting nexin family.

It localises to the cytoplasm. It is found in the endosome membrane. Its subcellular location is the preautophagosomal structure membrane. Required for cytoplasm to vacuole transport (Cvt), pexophagy and mitophagy. Also involved in endoplasmic reticulum-specific autophagic process and is essential for the survival of cells subjected to severe ER stress. Functions in protein retrieval from the endocytic pathway. The polypeptide is Autophagy-related protein 20 (atg20) (Schizosaccharomyces pombe (strain 972 / ATCC 24843) (Fission yeast)).